Consider the following 560-residue polypeptide: Zinc finger protein 250 (560 aa).

The KRAB domain maps to 22-93 (LTFEDVAVLL…DRKGAKKSQG (72 aa)). Residues Lys125, Lys136, Lys148, and Lys162 each participate in a glycyl lysine isopeptide (Lys-Gly) (interchain with G-Cter in SUMO2) cross-link. The C2H2-type 1 zinc-finger motif lies at 199-221 (YMCVECGKCFGRSSHLLQHQRIH). Residue Lys225 forms a Glycyl lysine isopeptide (Lys-Gly) (interchain with G-Cter in SUMO2) linkage. C2H2-type zinc fingers lie at residues 227–249 (YVCS…RRIH), 255–277 (YECN…HKIH), 283–305 (HECL…QRIH), 311–333 (YVCP…QRVH), 339–361 (HRCN…QRIH), 367–389 (YTCS…HNVH), and 395–417 (YECS…ERIH). Residue Lys421 forms a Glycyl lysine isopeptide (Lys-Gly) (interchain with G-Cter in SUMO2) linkage. 5 C2H2-type zinc fingers span residues 423 to 445 (YACY…QRVH), 451 to 473 (YVCG…ERIH), 479 to 501 (FQCT…LRTH), 507 to 529 (YECN…QRIH), and 535 to 557 (YECG…QKVH).

The protein belongs to the krueppel C2H2-type zinc-finger protein family.

Its subcellular location is the nucleus. Functionally, may be involved in transcriptional regulation. In Homo sapiens (Human), this protein is Zinc finger protein 250 (ZNF250).